The sequence spans 183 residues: UPF0398 protein LSL_0930 (183 aa).

Belongs to the UPF0398 family.

The chain is UPF0398 protein LSL_0930 from Ligilactobacillus salivarius (strain UCC118) (Lactobacillus salivarius).